We begin with the raw amino-acid sequence, 217 residues long: Ribosomal RNA small subunit methyltransferase G (217 aa).

S-adenosyl-L-methionine contacts are provided by residues glycine 78, phenylalanine 83, 129–130 (GE), and arginine 146.

It belongs to the methyltransferase superfamily. RNA methyltransferase RsmG family.

The protein resides in the cytoplasm. The enzyme catalyses guanosine(527) in 16S rRNA + S-adenosyl-L-methionine = N(7)-methylguanosine(527) in 16S rRNA + S-adenosyl-L-homocysteine. Its function is as follows. Specifically methylates the N7 position of guanine in position 527 of 16S rRNA. This Geobacter sulfurreducens (strain ATCC 51573 / DSM 12127 / PCA) protein is Ribosomal RNA small subunit methyltransferase G.